The following is a 314-amino-acid chain: Probable tRNA pseudouridine synthase B (314 aa).

The segment covering 1-10 has biased composition (basic residues); it reads MATRGRHRSR. The segment at 1–30 is disordered; the sequence is MATRGRHRSRTSGTSSEPMTLRAPPDERDL. Asp-72 acts as the Nucleophile in catalysis. One can recognise a PUA domain in the interval 237 to 314; the sequence is LPRVTIAPSA…LVVELDRMLV (78 aa).

This sequence belongs to the pseudouridine synthase TruB family. Type 2 subfamily.

The catalysed reaction is uridine(55) in tRNA = pseudouridine(55) in tRNA. Functionally, could be responsible for synthesis of pseudouridine from uracil-55 in the psi GC loop of transfer RNAs. This Haloarcula marismortui (strain ATCC 43049 / DSM 3752 / JCM 8966 / VKM B-1809) (Halobacterium marismortui) protein is Probable tRNA pseudouridine synthase B.